Here is a 660-residue protein sequence, read N- to C-terminus: Secretin PulD (660 aa).

The N-terminal stretch at 1 to 27 (MIIANVIRSFSLTLLIFAALLFRPAAA) is a signal peptide. The interval 28-124 (EEFSASFKGT…VASDAAPGIG (97 aa)) is N0. The N1 stretch occupies residues 126–190 (EVVTRVVPLT…TIVERVDNAG (65 aa)). An N2 region spans residues 191–264 (DRSVVTVPLS…MIKQLDRQQA (74 aa)). The tract at residues 267–341 (GNTKVIYLKY…DLERVIAQLD (75 aa)) is N3. The tract at residues 346 to 596 (QVLVEAIIAE…LFIRPTVIRD (251 aa)) is secretin. A s domain region spans residues 598 to 660 (DEYRQASSGQ…IDAFNLGGNL (63 aa)).

It belongs to the bacterial secretin family. GSP D subfamily. In terms of assembly, forms a cylindrical channel with 15 subunits.

Its subcellular location is the cell outer membrane. Functionally, involved in a type II secretion system (T2SS, formerly general secretion pathway, GSP) for the export of proteins. Required for the translocation of pullulanase. This subunit forms the outer membrane channel. In Klebsiella pneumoniae, this protein is Secretin PulD (pulD).